Reading from the N-terminus, the 503-residue chain is MFGELQKPHVLVLGLGESGLAMARWCGLNGCAVRVADTREAPANLVFLQAELMSAEFVGGPFAESLLDGIGLVAISPGLSPLEANTGELLAAARQRGIPVWGEIELFARALAHLQAESGYAPKVLAITGTNGKTTTTALTGRLVERAGKSVAVAGNISPSALDKLSACIASATLPDVWVLELSSFQLETTHTLAPHAATVLNVTQDHLDWHGSMEAYAASKARIFGPAGTACVQVLNRNDRLTMDMARPGTAPVTFGTDLPETPGSFGVLREGGMPWLVLAEPDSEAEGEGKPRRRKADATAQEAVPVRHKRLMPADALHIRGMHNATNAMAALALCRAIDLPLNALLHGLREYRGEPHRVEWVATIDEVEYFDDSKGTNVGATVAALSGLDKRVVLIAGGEGKGQDFSPLAAPVAQYARAVVLIGRAAGELRDALQGSGASLVDAATLEEAVNKAAELAEGGDVVLLSPACASLDMFRNYVHRAEVFRSAVEELALSRGIMP.

ATP is bound at residue 129 to 135; it reads GTNGKTT. A disordered region spans residues 284 to 305; sequence DSEAEGEGKPRRRKADATAQEA.

The protein belongs to the MurCDEF family.

It localises to the cytoplasm. It carries out the reaction UDP-N-acetyl-alpha-D-muramoyl-L-alanine + D-glutamate + ATP = UDP-N-acetyl-alpha-D-muramoyl-L-alanyl-D-glutamate + ADP + phosphate + H(+). Its pathway is cell wall biogenesis; peptidoglycan biosynthesis. Functionally, cell wall formation. Catalyzes the addition of glutamate to the nucleotide precursor UDP-N-acetylmuramoyl-L-alanine (UMA). The polypeptide is UDP-N-acetylmuramoylalanine--D-glutamate ligase (Cupriavidus pinatubonensis (strain JMP 134 / LMG 1197) (Cupriavidus necator (strain JMP 134))).